Here is a 265-residue protein sequence, read N- to C-terminus: 5'-nucleotidase SurE (265 aa).

Asp-8, Asp-9, Ser-41, and Asn-100 together coordinate a divalent metal cation.

It belongs to the SurE nucleotidase family. A divalent metal cation is required as a cofactor.

It is found in the cytoplasm. The catalysed reaction is a ribonucleoside 5'-phosphate + H2O = a ribonucleoside + phosphate. In terms of biological role, nucleotidase that shows phosphatase activity on nucleoside 5'-monophosphates. The chain is 5'-nucleotidase SurE from Brevibacillus brevis (strain 47 / JCM 6285 / NBRC 100599).